We begin with the raw amino-acid sequence, 157 residues long: uncharacterized protein (157 aa).

The signal sequence occupies residues 1–26 (MEALRRAHEVALRLLLCRPWASRAAA).

Its subcellular location is the secreted. This is an uncharacterized protein from Homo sapiens (Human).